Reading from the N-terminus, the 562-residue chain is MCLSALILVSLAAFTAGAGHPSSPPMVDTVQGKVLGKYISLEGFTQPVAVFLGVPFAKPPLGSLRFAPPQPAEPWSSVKNATSYPPMCFQDPVTGQIVNDLLTNRKEKIPLQFSEDCLYLNIYTPADLTKSDRLPVMVWIHGGGLVLGGASTYDGLVLSTHENVVVVVIQYRLGIWGFFSTGDEHSRGNWGHLDQVAALHWVQDNIAKFGGDPGSVTIFGESAGGESVSVLVLSPLAKNLFQRAISESGVALTAGLVKKNTRPLAEKIAVISGCKNTTSAAMVHCLRQKTEEELLGTTLKLNLFKLDLHGDSRQSHPFVPTVLDGVLLPKMPEEILAEKNFNTVPYIVGINKQEFGWILPTMMNYPPSDVKLDQMTAMSLLKKSSFLLNLPEDAIAVAIEKYLRDKDYTGRNKDQLLELIGDVVFGVPSVIVSRGHRDAGAPTYMYEFQYSPSFSSEMKPDTVVGDHGDEIYSVFGAPILRGGTSEEEINLSKMMMKFWANFARNGNPNGQGLPHWPEYDQKEGYLQIGATTQQAQKLKEKEVAFWTELLAKKQLPTEHTEL.

A signal peptide spans 1–19 (MCLSALILVSLAAFTAGAG). Asparagine 80 carries N-linked (GlcNAc...) asparagine glycosylation. Cysteine 88 and cysteine 117 are oxidised to a cystine. Serine 222 functions as the Acyl-ester intermediate in the catalytic mechanism. Cysteines 274 and 285 form a disulfide. An N-linked (GlcNAc...) asparagine glycan is attached at asparagine 276. Residues glutamate 354 and histidine 467 each act as charge relay system in the active site. The N-linked (GlcNAc...) asparagine glycan is linked to asparagine 490. The Prevents secretion from ER motif lies at 559-562 (HTEL).

The protein belongs to the type-B carboxylesterase/lipase family.

Its subcellular location is the endoplasmic reticulum lumen. The protein localises to the microsome membrane. The enzyme catalyses a carboxylic ester + H2O = an alcohol + a carboxylate + H(+). The catalysed reaction is all-trans-retinyl hexadecanoate + H2O = all-trans-retinol + hexadecanoate + H(+). Involved in the detoxification of xenobiotics and in the activation of ester and amide prodrugs. Hydrolyzes retinyl esters. The sequence is that of Carboxylesterase 1E from Mus musculus (Mouse).